Consider the following 464-residue polypeptide: Glutamate decarboxylase beta (464 aa).

Lysine 275 bears the N6-(pyridoxal phosphate)lysine mark.

This sequence belongs to the group II decarboxylase family. It depends on pyridoxal 5'-phosphate as a cofactor.

It catalyses the reaction L-glutamate + H(+) = 4-aminobutanoate + CO2. Functionally, converts internalized glutamate to GABA and increases the internal pH. Involved in glutamate-dependent acid resistance in gastric fluid. The polypeptide is Glutamate decarboxylase beta (gadB) (Listeria monocytogenes serovar 1/2a (strain ATCC BAA-679 / EGD-e)).